The primary structure comprises 584 residues: Actin-binding protein IPP (584 aa).

Residues C37 to V104 enclose the BTB domain. Kelch repeat units lie at residues Y289 to G343, M344 to G390, A391 to G437, I439 to D485, I487 to G533, and L535 to V583.

The protein resides in the cytoplasm. The protein localises to the cytoskeleton. Functionally, may play a role in organizing the actin cytoskeleton. The chain is Actin-binding protein IPP (IPP) from Homo sapiens (Human).